The chain runs to 637 residues: MNTGIIDLFDNHVDSIPTILPHQLATLDYLVRTIIDENRSVLLFHIMGSGKTIIALLFALIASRFKKVHILVPNINILKIFNYNMGVAMNLFNDEFIAENIFIHSTTSFYSLNYNDNVINYNGLSRYNNSIFIVDEAHNIFGNNTGELMTVIKNKNKIPFLLLSGSPITNTPNTLGHIIDLMSEETIDFGEIISRGKKVIQTLLNERGVNVLKDLLKGRISYYEMPDKDLPTIRYHGRKFLDTRVVYCHMSKLQERDYMITRRQLCYHEMFDKNMYNVSMAVLGQLNLMNNLDTLFQEQDKELYPNLKINNGVLYGEELVTLNISSKFKYFINRIQTLNGKHFIYFSNSTYGGLVIKYIMLSNGYSEYNGSQGTNPHMINGKPKTFAIVTSKMKSSLEDLLDVYNSPENDDGSQLMFLFSSNIMSESYTLKEVRHIWFMTIPDTFSQYNQILGRSIRKFSYVDISEPVNVYLLAAVYSDFNDEVTSLNDYTQDELINVLPFDIKKLLYLKFKTKETNRIYSILQEMSETYSLPPHPSIVKVLLGELVRQFFYNNSRIKYNDAKLLKMVTSVIKNKEDARNYIDDIVNGHFFVSNKVFDKSLLYKYENDIITVPFRLSYEPFVWGVNFRKEYNVVSSP.

A Helicase ATP-binding domain is found at arginine 32 to glutamate 185. Histidine 45–threonine 52 provides a ligand contact to ATP. Residues aspartate 135 to histidine 138 carry the DEXH box motif. A Helicase C-terminal domain is found at lysine 327–leucine 507.

Belongs to the helicase family. VETF subfamily. In terms of assembly, heterodimer of a 70 kDa and a 82 kDa subunit. Part of the early transcription complex composed of ETF, RAP94/OPG109, and the DNA-directed RNA polymerase.

Its subcellular location is the virion. In terms of biological role, acts with RNA polymerase to initiate transcription from early gene promoters. Is recruited by the RPO-associated protein of 94 kDa RAP94/OPG109 to form the early transcription complex, which also contains the core RNA polymerase. ETF heterodimer binds to early gene promoters. This is Early transcription factor 70 kDa subunit (OPG118) from Homo sapiens (Human).